The following is a 430-amino-acid chain: uncharacterized protein (430 aa).

The protein resides in the cytoplasm. It localises to the nucleus. This is an uncharacterized protein from Schizosaccharomyces pombe (strain 972 / ATCC 24843) (Fission yeast).